The chain runs to 507 residues: MFS transporter fsa7 (507 aa).

A disordered region spans residues 1–65 (MATKDPAVTT…PDDPEHPLNW (65 aa)). N-linked (GlcNAc...) asparagine glycosylation occurs at N64. A helical membrane pass occupies residues 72-92 (LHLVIVSLFTLAANLAATMFA). N106 carries N-linked (GlcNAc...) asparagine glycosylation. Transmembrane regions (helical) follow at residues 111-131 (AMTV…LAPL), 146-166 (FVYI…MFLV), 169-189 (IICG…VADL), 200-220 (ALFT…GGFV), and 228-248 (WTFR…VIFM). A glycan (N-linked (GlcNAc...) asparagine) is linked at N252. A run of 6 helical transmembrane segments spans residues 302-322 (PIVL…FLLF), 341-361 (GLAY…FSVL), 379-399 (LILM…YGWT), 406-426 (WIVP…VVIP), 429-449 (IYLV…ANLL), and 472-492 (GWGN…PWFF).

This sequence belongs to the major facilitator superfamily.

It localises to the cell membrane. Its function is as follows. Efflux pump that might be required for efficient secretion of fusarisetin A or other secondary metabolies produced by the fusarisetin A gene cluster. In Fusarium sp. (strain FN080326), this protein is MFS transporter fsa7.